The primary structure comprises 504 residues: Glycerol kinase (504 aa).

Residue Thr13 participates in ADP binding. The ATP site is built by Thr13, Thr14, and Ser15. Thr13 is a sn-glycerol 3-phosphate binding site. Arg17 provides a ligand contact to ADP. Sn-glycerol 3-phosphate is bound by residues Arg83, Glu84, and Tyr135. Glycerol contacts are provided by Arg83, Glu84, and Tyr135. Residue His231 is modified to Phosphohistidine; by HPr. Asp245 lines the sn-glycerol 3-phosphate pocket. 2 residues coordinate glycerol: Asp245 and Gln246. Residues Thr267 and Gly310 each contribute to the ADP site. Residues Thr267, Gly310, Gln314, and Gly411 each coordinate ATP. ADP-binding residues include Gly411 and Asn415.

The protein belongs to the FGGY kinase family. As to quaternary structure, homotetramer and homodimer (in equilibrium). In terms of processing, the phosphoenolpyruvate-dependent sugar phosphotransferase system (PTS), including enzyme I, and histidine-containing protein (HPr) are required for the phosphorylation, which leads to the activation of the enzyme.

The enzyme catalyses glycerol + ATP = sn-glycerol 3-phosphate + ADP + H(+). It functions in the pathway polyol metabolism; glycerol degradation via glycerol kinase pathway; sn-glycerol 3-phosphate from glycerol: step 1/1. Activated by phosphorylation and inhibited by fructose 1,6-bisphosphate (FBP). Its function is as follows. Key enzyme in the regulation of glycerol uptake and metabolism. Catalyzes the phosphorylation of glycerol to yield sn-glycerol 3-phosphate. This Ligilactobacillus salivarius (strain UCC118) (Lactobacillus salivarius) protein is Glycerol kinase.